The chain runs to 815 residues: Putative transcription factor phnE (815 aa).

A disordered region spans residues 522–577 (PSRRNSDGSAHSSPSSTPSSSSTSSPLPSPASERPPPLDVVTRPSTGTSTPSSPTL). A compositionally biased stretch (low complexity) spans 523–547 (SRRNSDGSAHSSPSSTPSSSSTSSP). The span at 548 to 559 (LPSPASERPPPL) shows a compositional bias: pro residues. The span at 563 to 577 (TRPSTGTSTPSSPTL) shows a compositional bias: low complexity.

The protein resides in the nucleus. Its function is as follows. Putative transcription factor that may be involved in the regulation of the expression of the gene cluster that mediates the biosynthesis of phenalenones such as herqueinone, compounds that have been reported to treat tumors, bacterial infections and/or mycoses, and rheumatic diseases. The chain is Putative transcription factor phnE from Penicillium herquei.